Here is a 21-residue protein sequence, read N- to C-terminus: 71 kDa F-actin-binding protein (21 aa).

To yeast fimbrin. The N-terminus is blocked.

Its function is as follows. Binds directly to F-actin and induces actin filament bundling. May function as a regulator of actin filament organization. The chain is 71 kDa F-actin-binding protein from Tetrahymena pyriformis.